The chain runs to 728 residues: Homoaconitase, mitochondrial (728 aa).

The N-terminal 24 residues, 1–24 (MVAIPRLARLSVPAWALSARGRFY), are a transit peptide targeting the mitochondrion. [4Fe-4S] cluster is bound by residues Cys-362, Cys-422, and Cys-425.

The protein belongs to the aconitase/IPM isomerase family. It depends on [4Fe-4S] cluster as a cofactor.

It localises to the mitochondrion. It catalyses the reaction (2R,3S)-homoisocitrate = cis-homoaconitate + H2O. Its pathway is amino-acid biosynthesis; L-lysine biosynthesis via AAA pathway; L-alpha-aminoadipate from 2-oxoglutarate: step 3/5. Its function is as follows. Catalyzes the reversible hydration of cis-homoaconitate to (2R,3S)-homoisocitrate, a step in the alpha-aminoadipate pathway for lysine biosynthesis. This is Homoaconitase, mitochondrial (LYS4) from Cryptococcus neoformans var. neoformans serotype D (strain B-3501A) (Filobasidiella neoformans).